The primary structure comprises 459 residues: Putative metabolite transport protein YdjK (459 aa).

Topologically, residues 1-25 (MEQITKPHCGARLDRLPDCRWHSSM) are cytoplasmic. Residues 26-46 (FAIVAFGLLVCWSNAVGGLIL) form a helical membrane-spanning segment. Topologically, residues 47–60 (AQLKALGWTDNSTT) are periplasmic. A helical transmembrane segment spans residues 61–81 (ATFSAITTAGMFLGALVGGII). The Cytoplasmic portion of the chain corresponds to 82 to 90 (GDKTGRRNA). The helical transmembrane segment at 91–111 (FILYEAIHIASMVVGAFSPNM) threads the bilayer. Residue aspartate 112 is a topological domain, periplasmic. The helical transmembrane segment at 113–133 (FLIACRFVMGVGLGALLVTLF) threads the bilayer. The Cytoplasmic segment spans residues 134–153 (AGFTEYMPGRNRGTWSSRVS). Residues 154 to 174 (FIGNWSYPLCSLIAMGLTPLI) traverse the membrane as a helical segment. The Periplasmic segment spans residues 175 to 181 (SAEWNWR). The chain crosses the membrane as a helical span at residues 182 to 202 (VQLLIPAILSLIATALAWRYF). The Cytoplasmic portion of the chain corresponds to 203–271 (PESPRWLESR…LLKRVILGSC (69 aa)). The chain crosses the membrane as a helical span at residues 272 to 292 (VLIAMNVVQYTLINWLPTIFM). At 293–301 (TQGINLKDS) the chain is on the periplasmic side. A helical transmembrane segment spans residues 302–322 (IVLNTMSMFGAPFGIFIAMLV). The Cytoplasmic portion of the chain corresponds to 323–329 (MDKIPRK). The helical transmembrane segment at 330 to 350 (TMGVGLLILIAVLGYIYSLQT) threads the bilayer. Serine 351 is a topological domain (periplasmic). A helical membrane pass occupies residues 352–372 (MLLITLIGFFLITFVYMYVCY). Residues 373–399 (ASAVYVPEIWPTEAKLRGSGLANAVGR) are Cytoplasmic-facing. A run of 2 helical transmembrane segments spans residues 400-420 (ISGI…GVTG) and 421-441 (VFIL…TIGI). Residues 442 to 459 (ETKGVSVESLSIDAVANK) are Cytoplasmic-facing.

It belongs to the major facilitator superfamily. Sugar transporter (TC 2.A.1.1) family.

The protein resides in the cell inner membrane. In Escherichia coli (strain K12), this protein is Putative metabolite transport protein YdjK (ydjK).